Reading from the N-terminus, the 373-residue chain is Enoyl-[acyl-carrier-protein] reductase, mitochondrial (373 aa).

The N-terminal 53 residues, 1 to 53 (MLVSRRLTGARARAPLLASLLEAWCRQGRTTSSYSAFSEPSHVRALVYGNHGD), are a transit peptide targeting the mitochondrion. N6-acetyllysine; alternate is present on lysine 61. Lysine 61 carries the post-translational modification N6-succinyllysine; alternate. Residue tyrosine 94 is the Proton donor of the active site. NADP(+) contacts are provided by residues asparagine 167, 193–196 (NSGV), and 216–218 (RDR). An N6-acetyllysine; alternate mark is found at lysine 252 and lysine 267. Residues lysine 252 and lysine 267 each carry the N6-succinyllysine; alternate modification. Residues 285–288 (YGGM) and 310–312 (FWL) each bind NADP(+). Lysine 316 is subject to N6-succinyllysine. NADP(+) is bound at residue lysine 368.

It belongs to the zinc-containing alcohol dehydrogenase family. Quinone oxidoreductase subfamily. Homodimer. In terms of assembly, interacts with PPARA in the nucleus and increases its activity.

The protein localises to the mitochondrion. It localises to the cytoplasm. The protein resides in the nucleus. It carries out the reaction a 2,3-saturated acyl-[ACP] + NADP(+) = a (2E)-enoyl-[ACP] + NADPH + H(+). The enzyme catalyses (2E)-butenoyl-[ACP] + NADPH + H(+) = butanoyl-[ACP] + NADP(+). It catalyses the reaction (2E)-hexenoyl-[ACP] + NADPH + H(+) = hexanoyl-[ACP] + NADP(+). The catalysed reaction is (2E)-octenoyl-[ACP] + NADPH + H(+) = octanoyl-[ACP] + NADP(+). It carries out the reaction (2E)-decenoyl-[ACP] + NADPH + H(+) = decanoyl-[ACP] + NADP(+). The enzyme catalyses (2E)-dodecenoyl-[ACP] + NADPH + H(+) = dodecanoyl-[ACP] + NADP(+). It catalyses the reaction (2E)-tetradecenoyl-[ACP] + NADPH + H(+) = tetradecanoyl-[ACP] + NADP(+). The catalysed reaction is (2E)-hexadecenoyl-[ACP] + NADPH + H(+) = hexadecanoyl-[ACP] + NADP(+). In terms of biological role, catalyzes the NADPH-dependent reduction of trans-2-enoyl thioesters in mitochondrial fatty acid synthesis (fatty acid synthesis type II). Fatty acid chain elongation in mitochondria uses acyl carrier protein (ACP) as an acyl group carrier, but the enzyme accepts both ACP and CoA thioesters as substrates in vitro. Displays a preference for medium-chain over short- and long-chain substrates. May provide the octanoyl chain used for lipoic acid biosynthesis, regulating protein lipoylation and mitochondrial respiratory activity particularly in Purkinje cells. Involved in iron homeostasis; affecting Fe-S cluster assembly and ceramide metabolism. Required for proper morphology and bioenergetic functions of mitochondria. Required for maintenance of neurons. The polypeptide is Enoyl-[acyl-carrier-protein] reductase, mitochondrial (Mecr) (Rattus norvegicus (Rat)).